A 203-amino-acid polypeptide reads, in one-letter code: Small ribosomal subunit protein uS4c (203 aa).

The 64-residue stretch at 91-154 folds into the S4 RNA-binding domain; that stretch reads MRLDNIIFRL…KYESIISKNI (64 aa).

Belongs to the universal ribosomal protein uS4 family. As to quaternary structure, part of the 30S ribosomal subunit. Contacts protein S5. The interaction surface between S4 and S5 is involved in control of translational fidelity.

It is found in the plastid. It localises to the chloroplast. In terms of biological role, one of the primary rRNA binding proteins, it binds directly to 16S rRNA where it nucleates assembly of the body of the 30S subunit. Its function is as follows. With S5 and S12 plays an important role in translational accuracy. The sequence is that of Small ribosomal subunit protein uS4c (rps4) from Lopidium struthiopteris (Moss).